Here is a 169-residue protein sequence, read N- to C-terminus: Ribosome maturation factor RimM (169 aa).

The PRC barrel domain occupies 97-169 (PGEYYWYQLI…VITVDWDMNF (73 aa)).

It belongs to the RimM family. As to quaternary structure, binds ribosomal protein uS19.

It localises to the cytoplasm. In terms of biological role, an accessory protein needed during the final step in the assembly of 30S ribosomal subunit, possibly for assembly of the head region. Essential for efficient processing of 16S rRNA. May be needed both before and after RbfA during the maturation of 16S rRNA. It has affinity for free ribosomal 30S subunits but not for 70S ribosomes. The protein is Ribosome maturation factor RimM of Legionella pneumophila subsp. pneumophila (strain Philadelphia 1 / ATCC 33152 / DSM 7513).